A 504-amino-acid chain; its full sequence is Maturase K (504 aa).

The protein belongs to the intron maturase 2 family. MatK subfamily.

The protein resides in the plastid. Its subcellular location is the chloroplast. In terms of biological role, usually encoded in the trnK tRNA gene intron. Probably assists in splicing its own and other chloroplast group II introns. The polypeptide is Maturase K (Kokia drynarioides (Hawaiian tree cotton)).